Consider the following 99-residue polypeptide: uncharacterized protein (99 aa).

This is an uncharacterized protein from Escherichia coli O157:H7.